We begin with the raw amino-acid sequence, 431 residues long: SH2 domain-containing protein 4B (431 aa).

Positions 201–235 (QASENEEREWEEQLRRSKAADEERSRRAQRARDEY) are disordered. The segment covering 211 to 235 (EEQLRRSKAADEERSRRAQRARDEY) has biased composition (basic and acidic residues). The SH2 domain occupies 325 to 417 (WFHGIISRES…SGGELLQEPC (93 aa)).

This is SH2 domain-containing protein 4B (Sh2d4b) from Mus musculus (Mouse).